The sequence spans 354 residues: Replication factor C subunit 5 (354 aa).

ATP is bound by residues V5, S17, 43 to 51 (GPNGTGKKT), and R231.

The protein belongs to the activator 1 small subunits family. Replication factor C (RFC) is a heteropentamer of subunits RFC1, RFC2, RFC3, RFC4 and RFC5 and forms a complex with POL30/PCNA in the presence of ATP. Component of the RAD24-RFC complex which consists of RAD24, RFC2, RFC3, RFC4 and RFC5 and associates with the checkpoint clamp DDC1:MEC3:RAD17 complex. Component of the ELG1-RFC complex which consists of ELG1, RFC2, RFC3, RFC4 and RFC5. Component of the CTF18-RFC complex, which consists of CTF18, CTF8, DCC1, RFC2, RFC3, RFC4 and RFC5. RFC5 interacts with ECO1.

Its subcellular location is the nucleus. Functionally, component of ATP-dependent clamp loader (RFC and RFC-like) complexes for DNA clamps, such as the POL30/PCNA homotrimer and the checkpoint clamp DDC1:MEC3:RAD17 complex. During a clamp loading circle, the RFC:clamp complex binds to DNA and the recognition of the double-stranded/single-stranded junction stimulates ATP hydrolysis by RFC. The complex presumably provides bipartite ATP sites in which one subunit supplies a catalytic site for hydrolysis of ATP bound to the neighboring subunit. Dissociation of RFC from the clamp leaves the clamp encircling DNA. Component of the replication factor C (RFC or activator 1) complex which loads POL30/PCNA and acts during elongation of primed DNA templates by DNA polymerase delta and epsilon. RFC has an essential but redundant activity in sister chromatid cohesion establishment. Component of the RFC-like complex CTF18-RFC which is required for efficient establishment of chromosome cohesion during S-phase and may load or unload POL30/PCNA. Component of the RFC-like RAD24-RFC complex which loads the checkpoint clamp DDC1:MEC3:RAD17 complex and is involved in DNA repair pathways. Component of the RFC-like ELG1-RFC complex which appears to have a role in DNA replication, replication fork re-start, recombination and repair. The polypeptide is Replication factor C subunit 5 (RFC5) (Saccharomyces cerevisiae (strain ATCC 204508 / S288c) (Baker's yeast)).